Consider the following 386-residue polypeptide: Succinate--CoA ligase [ADP-forming] subunit beta (386 aa).

The ATP-grasp domain maps to 9–244 (KEILRKYGVP…HDEEDPLETR (236 aa)). ATP contacts are provided by residues K46, 53–55 (GRG), E99, C102, and E107. Mg(2+)-binding residues include N199 and D213. Residues N264 and 321–323 (GIM) each bind substrate.

Belongs to the succinate/malate CoA ligase beta subunit family. In terms of assembly, heterotetramer of two alpha and two beta subunits. The cofactor is Mg(2+).

The catalysed reaction is succinate + ATP + CoA = succinyl-CoA + ADP + phosphate. It catalyses the reaction GTP + succinate + CoA = succinyl-CoA + GDP + phosphate. It functions in the pathway carbohydrate metabolism; tricarboxylic acid cycle; succinate from succinyl-CoA (ligase route): step 1/1. In terms of biological role, succinyl-CoA synthetase functions in the citric acid cycle (TCA), coupling the hydrolysis of succinyl-CoA to the synthesis of either ATP or GTP and thus represents the only step of substrate-level phosphorylation in the TCA. The beta subunit provides nucleotide specificity of the enzyme and binds the substrate succinate, while the binding sites for coenzyme A and phosphate are found in the alpha subunit. The sequence is that of Succinate--CoA ligase [ADP-forming] subunit beta from Rickettsia conorii (strain ATCC VR-613 / Malish 7).